A 342-amino-acid chain; its full sequence is Succinylglutamate desuccinylase (342 aa).

Zn(2+)-binding residues include H64, E67, and H159. E222 is a catalytic residue.

Belongs to the AspA/AstE family. Succinylglutamate desuccinylase subfamily. Requires Zn(2+) as cofactor.

It carries out the reaction N-succinyl-L-glutamate + H2O = L-glutamate + succinate. Its pathway is amino-acid degradation; L-arginine degradation via AST pathway; L-glutamate and succinate from L-arginine: step 5/5. Functionally, transforms N(2)-succinylglutamate into succinate and glutamate. This is Succinylglutamate desuccinylase from Burkholderia orbicola (strain MC0-3).